A 234-amino-acid chain; its full sequence is Ubiquinone biosynthesis O-methyltransferase (234 aa).

Residues Arg-40, Gly-59, Asp-80, and Met-123 each coordinate S-adenosyl-L-methionine.

The protein belongs to the methyltransferase superfamily. UbiG/COQ3 family.

It carries out the reaction a 3-demethylubiquinol + S-adenosyl-L-methionine = a ubiquinol + S-adenosyl-L-homocysteine + H(+). The enzyme catalyses a 3-(all-trans-polyprenyl)benzene-1,2-diol + S-adenosyl-L-methionine = a 2-methoxy-6-(all-trans-polyprenyl)phenol + S-adenosyl-L-homocysteine + H(+). Its pathway is cofactor biosynthesis; ubiquinone biosynthesis. O-methyltransferase that catalyzes the 2 O-methylation steps in the ubiquinone biosynthetic pathway. The polypeptide is Ubiquinone biosynthesis O-methyltransferase (Coxiella burnetii (strain Dugway 5J108-111)).